A 357-amino-acid polypeptide reads, in one-letter code: Putative electron transport protein YccM (357 aa).

Topologically, residues 1 to 36 (MAENKRTRWQRRPGTTGGKLPWNDWRNATTWRKATQ) are cytoplasmic. A helical transmembrane segment spans residues 37–54 (LLLLAMNIYIAITFWYWV). Over 55 to 91 (RYYETASSTTFVARPGGIEGWLPIAGLMNLKYSLVTG) the chain is Periplasmic. The chain crosses the membrane as a helical span at residues 92–114 (QLPSVHAAAMLLLVAFIVISLLL). The Cytoplasmic portion of the chain corresponds to 115 to 158 (KKAFCSWLCPVGTLSELIGDLGNKLFGRQCVLPRWLDIPLRGVK). The chain crosses the membrane as a helical span at residues 159–181 (YLLLSFFIYIALLMPAQAIHYFM). The Periplasmic portion of the chain corresponds to 182–195 (LSPYSVVMDVKMLD). The chain crosses the membrane as a helical span at residues 196 to 218 (FFRHMGTATLISVTVLLIASLFI). The Cytoplasmic portion of the chain corresponds to 219-309 (RHAWCRYLCP…KPAANKKAFA (91 aa)). 2 4Fe-4S ferredoxin-type domains span residues 242–270 (FKIRRNAESCIDCGKCAKNCPSRIPVDKL) and 269–299 (KLIQVRTVECTGCMTCVESCPVASTLTFSLQ). Cys-251, Cys-254, Cys-257, Cys-261, Cys-278, Cys-281, Cys-284, and Cys-288 together coordinate [4Fe-4S] cluster. Residues 310 to 332 (LSGWLMTLLVLGIMFAVIGYAMY) form a helical membrane-spanning segment. Over 333–357 (AGVWQSPVPEELYRRLIPQAPMIGH) the chain is Periplasmic.

The protein localises to the cell inner membrane. The protein is Putative electron transport protein YccM (yccM) of Escherichia coli (strain K12).